Reading from the N-terminus, the 104-residue chain is uncharacterized protein (104 aa).

This is an uncharacterized protein from Haemophilus influenzae (strain ATCC 51907 / DSM 11121 / KW20 / Rd).